We begin with the raw amino-acid sequence, 421 residues long: UPF0229 protein lpp2857 (421 aa).

The segment at 83–110 (IAGDRIKRPSGGGAGGAGGNASDSGEGE) is disordered. Residues 92–101 (SGGGAGGAGG) are compositionally biased toward gly residues.

This sequence belongs to the UPF0229 family.

This is UPF0229 protein lpp2857 from Legionella pneumophila (strain Paris).